The primary structure comprises 325 residues: Protein UL76 (325 aa).

Residues 222–286 form a disordered region; it reads ARASAVAGGR…VRGGGAVEPA (65 aa). Over residues 247 to 258 the composition is skewed to low complexity; it reads GPGAQTVSASGA.

The protein belongs to the herpesviridae UL24 family.

It localises to the virion. The protein localises to the host cytoplasm. It is found in the host nucleus. The protein resides in the host nucleolus. Its subcellular location is the host Golgi apparatus. In terms of biological role, may participate in nuclear egress of viral particles. Plays a role in the dispersal of several host nucleolar proteins including NCL/nucleolin and NPM1. Since deletion of host NCL/nucleolin negatively impact on nuclear egress, UL76 supposedly acts on this process through its effect on host nucleoli. Induces cell cycle arrest in host cells at the G2/M phase following by apoptosis. The mechanism involves the inhibition of host mitotic complex cyclinB/CDK1. This chain is Protein UL76 (UL76), found in Human cytomegalovirus (strain Merlin) (HHV-5).